The sequence spans 188 residues: dCTP deaminase (188 aa).

Residues 111 to 116, 135 to 137, Gln-156, Tyr-170, and Gln-180 each bind dCTP; these read KSTYAR and TLE. Glu-137 functions as the Proton donor/acceptor in the catalytic mechanism.

It belongs to the dCTP deaminase family. In terms of assembly, homotrimer.

The enzyme catalyses dCTP + H2O + H(+) = dUTP + NH4(+). It participates in pyrimidine metabolism; dUMP biosynthesis; dUMP from dCTP (dUTP route): step 1/2. In terms of biological role, catalyzes the deamination of dCTP to dUTP. This is dCTP deaminase from Azoarcus sp. (strain BH72).